The primary structure comprises 264 residues: uncharacterized protein (264 aa).

Positions 1-16 are cleaved as a signal peptide; sequence MKGKSALTLLLAGIFS. Cysteine 17 carries N-palmitoyl cysteine lipidation. Cysteine 17 carries the S-diacylglycerol cysteine lipid modification.

Its subcellular location is the cell inner membrane. This is an uncharacterized protein from Escherichia coli (strain K12).